Consider the following 227-residue polypeptide: MSLLTLIRHGQSIWNQQNRFTGWVDVSLSQSGVKEAQRAAQMLSQQRFDLAFTSELLRAQDTLYEILRHNRQCHQYVRIHDTGSQWYEHFEASPAEELELRIYVSQQLNERYYGDLQGLNKDKARQLFGDEQVHTWRRSYNVAPPNGESLAMTATRAIAYFQSHIVPALQQGKNVLVCAHGNSLRAIIMHIEKMTAAQIAAYELKTASPHIYQCNTAMDILSKQVLE.

Substrate is bound by residues Arg-8–Asn-15, Thr-21–Gly-22, Arg-58, Glu-110–Tyr-113, Lys-121, Arg-137–Arg-138, and Gly-181–Asn-182. The active-site Tele-phosphohistidine intermediate is the His-9. Glu-110 functions as the Proton donor/acceptor in the catalytic mechanism.

Belongs to the phosphoglycerate mutase family. BPG-dependent PGAM subfamily. Homodimer.

The catalysed reaction is (2R)-2-phosphoglycerate = (2R)-3-phosphoglycerate. The protein operates within carbohydrate degradation; glycolysis; pyruvate from D-glyceraldehyde 3-phosphate: step 3/5. In terms of biological role, catalyzes the interconversion of 2-phosphoglycerate and 3-phosphoglycerate. The protein is 2,3-bisphosphoglycerate-dependent phosphoglycerate mutase of Pseudoalteromonas atlantica (strain T6c / ATCC BAA-1087).